The following is a 303-amino-acid chain: Probable 5-dehydro-4-deoxyglucarate dehydratase (303 aa).

This sequence belongs to the DapA family.

The enzyme catalyses 5-dehydro-4-deoxy-D-glucarate + H(+) = 2,5-dioxopentanoate + CO2 + H2O. It participates in carbohydrate acid metabolism; D-glucarate degradation; 2,5-dioxopentanoate from D-glucarate: step 2/2. This Pseudomonas fluorescens (strain Pf0-1) protein is Probable 5-dehydro-4-deoxyglucarate dehydratase.